Here is a 371-residue protein sequence, read N- to C-terminus: Cytochrome b (371 aa).

4 helical membrane passes run 25–45, 69–90, 105–125, and 170–190; these read FGSM…FLSM, WMMQ…YMHI, WLSG…GYVL, and FFAL…VHIM. Heme b contacts are provided by His-75 and His-89. Residues His-174 and His-188 each contribute to the heme b site. Residue His-193 participates in a ubiquinone binding. 4 consecutive transmembrane segments (helical) span residues 218 to 238, 280 to 300, 312 to 332, and 339 to 358; these read YKDL…VSFF, LGGA…PFTH, LMQF…WTAT, and FTTI…MSNP.

Belongs to the cytochrome b family. As to quaternary structure, the cytochrome bc1 complex contains 3 respiratory subunits (MT-CYB, CYC1 and UQCRFS1), 2 core proteins (UQCRC1 and UQCRC2) and probably 6 low-molecular weight proteins. Heme b is required as a cofactor.

The protein localises to the mitochondrion inner membrane. Component of the ubiquinol-cytochrome c reductase complex (complex III or cytochrome b-c1 complex) that is part of the mitochondrial respiratory chain. The b-c1 complex mediates electron transfer from ubiquinol to cytochrome c. Contributes to the generation of a proton gradient across the mitochondrial membrane that is then used for ATP synthesis. This Candoia carinata (Papuan tree boa) protein is Cytochrome b (MT-CYB).